Reading from the N-terminus, the 63-residue chain is MPKIIEAIYENGVFKPLQKVDLKEGEKIRILLKKIDVEKFIMAKLPEEKIRELERRFEDENLY.

Belongs to the UPF0165 family.

Functionally, possibly the antitoxin component of a type II toxin-antitoxin (TA) system. The protein is Putative antitoxin AF_1084 of Archaeoglobus fulgidus (strain ATCC 49558 / DSM 4304 / JCM 9628 / NBRC 100126 / VC-16).